We begin with the raw amino-acid sequence, 441 residues long: MSEMTPREIVHELDSHIIGQQNAKRSVAIALRNRWRRMQLDAALRQEVTPKNILMIGPTGVGKTEIARRLAKLAKAPFIKVEATKFTEVGYVGKEVEQIIRDLTDAAVKLTREEQMAKCKFRAEEAAEERILDALLPKPKEDWDTEKKDDTGTRQVFRKKLREGQLDDKEIEIDIAAPQVGIEIMSPPGMEEMTSQLQSMFQNMGPGASKRRKMTIKEAYKLLIEEEAAKLVNPDDLKEQAIELVEQHGIVFLDEIDKICKRGDTSGPDVSREGVQRDLLPLVEGCTVNTKHGMVKTDHILFIASGAFQMSKPSDLIPELQGRLPIRVELEALSANDFKRILTEPHASLTEQYVALMATEGVKVEFSESGIERIAQAAWQVNERTENIGARRLHTVMERLMEDLSFEASDKSGSTTVIDADYVNAHLENLVQDEDLSRFIL.

Residues Ile-18, 60 to 65 (GVGKTE), Asp-254, Glu-319, and Arg-391 contribute to the ATP site.

It belongs to the ClpX chaperone family. HslU subfamily. As to quaternary structure, a double ring-shaped homohexamer of HslV is capped on each side by a ring-shaped HslU homohexamer. The assembly of the HslU/HslV complex is dependent on binding of ATP.

It localises to the cytoplasm. ATPase subunit of a proteasome-like degradation complex; this subunit has chaperone activity. The binding of ATP and its subsequent hydrolysis by HslU are essential for unfolding of protein substrates subsequently hydrolyzed by HslV. HslU recognizes the N-terminal part of its protein substrates and unfolds these before they are guided to HslV for hydrolysis. This chain is ATP-dependent protease ATPase subunit HslU, found in Shewanella loihica (strain ATCC BAA-1088 / PV-4).